We begin with the raw amino-acid sequence, 416 residues long: Gamma-glutamyl phosphate reductase (416 aa).

This sequence belongs to the gamma-glutamyl phosphate reductase family.

It localises to the cytoplasm. It catalyses the reaction L-glutamate 5-semialdehyde + phosphate + NADP(+) = L-glutamyl 5-phosphate + NADPH + H(+). It participates in amino-acid biosynthesis; L-proline biosynthesis; L-glutamate 5-semialdehyde from L-glutamate: step 2/2. Functionally, catalyzes the NADPH-dependent reduction of L-glutamate 5-phosphate into L-glutamate 5-semialdehyde and phosphate. The product spontaneously undergoes cyclization to form 1-pyrroline-5-carboxylate. In Streptococcus thermophilus (strain ATCC BAA-491 / LMD-9), this protein is Gamma-glutamyl phosphate reductase.